We begin with the raw amino-acid sequence, 544 residues long: Protein nucleotidyltransferase YdiU (544 aa).

ATP-binding residues include Gly-133, Gly-135, Arg-136, Lys-155, Asp-167, Gly-168, Arg-218, and Arg-225. The active-site Proton acceptor is the Asp-294. Mg(2+) is bound by residues Asn-295 and Asp-304. Asp-304 is an ATP binding site.

The protein belongs to the SELO family. The cofactor is Mg(2+). Mn(2+) serves as cofactor.

It carries out the reaction L-seryl-[protein] + ATP = 3-O-(5'-adenylyl)-L-seryl-[protein] + diphosphate. The enzyme catalyses L-threonyl-[protein] + ATP = 3-O-(5'-adenylyl)-L-threonyl-[protein] + diphosphate. It catalyses the reaction L-tyrosyl-[protein] + ATP = O-(5'-adenylyl)-L-tyrosyl-[protein] + diphosphate. The catalysed reaction is L-histidyl-[protein] + UTP = N(tele)-(5'-uridylyl)-L-histidyl-[protein] + diphosphate. It carries out the reaction L-seryl-[protein] + UTP = O-(5'-uridylyl)-L-seryl-[protein] + diphosphate. The enzyme catalyses L-tyrosyl-[protein] + UTP = O-(5'-uridylyl)-L-tyrosyl-[protein] + diphosphate. Its function is as follows. Nucleotidyltransferase involved in the post-translational modification of proteins. It can catalyze the addition of adenosine monophosphate (AMP) or uridine monophosphate (UMP) to a protein, resulting in modifications known as AMPylation and UMPylation. The chain is Protein nucleotidyltransferase YdiU from Cupriavidus metallidurans (strain ATCC 43123 / DSM 2839 / NBRC 102507 / CH34) (Ralstonia metallidurans).